Reading from the N-terminus, the 199-residue chain is MDEDGLPIVGSGIDLTKVPPIQQKRTVAFLNQFVVHSVQFLNRFATVCEEKLSALSLRIQQIETTLNILEAKLSSIPGLEDVKVEAQHISESNISNGHLPSQPDAQSVVVSPQSDNNSMNDGILQKEEAKSENITTVSKDPRYARYLKMVQVGVPVMAIKNKMIAEGLNPDLLETPDAPVPDGEPEAEESSDSESSFSD.

Residues 47–76 (VCEEKLSALSLRIQQIETTLNILEAKLSSI) are a coiled coil. The segment covering 93–120 (NISNGHLPSQPDAQSVVVSPQSDNNSMN) has biased composition (polar residues). Disordered stretches follow at residues 93–136 (NISN…NITT) and 170–199 (PDLLETPDAPVPDGEPEAEESSDSESSFSD). The span at 183–192 (GEPEAEESSD) shows a compositional bias: acidic residues.

The protein belongs to the CCDC53 family. Component of the WASH complex.

The polypeptide is WASH complex subunit 3 (Xenopus laevis (African clawed frog)).